Consider the following 391-residue polypeptide: MVTQNKKILIITGSFGNGHMQVTQSIVNQLNDMNLDHLSVIEHDLFMEAHPILTSICKKWYINSFKYFRNMYKGFYYSRPDKLDKCFYKYYGLNKLINLLIKEKPDLILLTFPTPVMSVLTEQFNINIPVATVMTDYRLHKNWITPYSTRYYVATKETKQDFIDVGIDPSTVKVTGIPIDNKFETPINQKQWLIDNNLDPDKQTILMSAGAFGVSKGFDTMITDILAKSANAQVVMICGKSKELKRSLIAKFKSNENVLILGYTKHMNEWMASSQLMITKPGGITITEGFARCIPMIFLNPAPGQELENALYFEEKGFGKIADTPEEAIKIVASLTNGNEQLTNMISTMEQDKIKYATQTICRDLLDLIGHSSQPQEIYGKVPLYARFFVK.

This sequence belongs to the glycosyltransferase 28 family. UgtP subfamily.

The protein resides in the cell membrane. The enzyme catalyses a 1,2-diacyl-3-O-(beta-D-glucopyranosyl)-sn-glycerol + UDP-alpha-D-glucose = a 1,2-diacyl-3-O-(beta-D-Glc-(1-&gt;6)-beta-D-Glc)-sn-glycerol + UDP + H(+). It catalyses the reaction a 1,2-diacyl-sn-glycerol + UDP-alpha-D-glucose = a 1,2-diacyl-3-O-(beta-D-glucopyranosyl)-sn-glycerol + UDP + H(+). It participates in glycolipid metabolism; diglucosyl-diacylglycerol biosynthesis. Processive glucosyltransferase involved in the biosynthesis of both the bilayer- and non-bilayer-forming membrane glucolipids. Is able to successively transfer two glucosyl residues to diacylglycerol (DAG), thereby catalyzing the formation of beta-monoglucosyl-DAG (3-O-(beta-D-glucopyranosyl)-1,2-diacyl-sn-glycerol) and beta-diglucosyl-DAG (3-O-(beta-D-glucopyranosyl-beta-(1-&gt;6)-D-glucopyranosyl)-1,2-diacyl-sn-glycerol). Beta-diglucosyl-DAG is the predominant glycolipid found in Bacillales and is also used as a membrane anchor for lipoteichoic acid (LTA). This is Processive diacylglycerol beta-glucosyltransferase from Staphylococcus aureus (strain Mu3 / ATCC 700698).